The primary structure comprises 112 residues: Putative pterin-4-alpha-carbinolamine dehydratase (112 aa).

It belongs to the pterin-4-alpha-carbinolamine dehydratase family.

The enzyme catalyses (4aS,6R)-4a-hydroxy-L-erythro-5,6,7,8-tetrahydrobiopterin = (6R)-L-erythro-6,7-dihydrobiopterin + H2O. The polypeptide is Putative pterin-4-alpha-carbinolamine dehydratase (Syntrophotalea carbinolica (strain DSM 2380 / NBRC 103641 / GraBd1) (Pelobacter carbinolicus)).